Reading from the N-terminus, the 697-residue chain is Elongation factor G (697 aa).

A tr-type G domain is found at 8-283 (EHIRNIGICA…AVVDFLPSPT (276 aa)). GTP contacts are provided by residues 17–24 (AHIDAGKT), 81–85 (DTPGH), and 135–138 (NKMD).

This sequence belongs to the TRAFAC class translation factor GTPase superfamily. Classic translation factor GTPase family. EF-G/EF-2 subfamily.

The protein localises to the cytoplasm. Functionally, catalyzes the GTP-dependent ribosomal translocation step during translation elongation. During this step, the ribosome changes from the pre-translocational (PRE) to the post-translocational (POST) state as the newly formed A-site-bound peptidyl-tRNA and P-site-bound deacylated tRNA move to the P and E sites, respectively. Catalyzes the coordinated movement of the two tRNA molecules, the mRNA and conformational changes in the ribosome. The chain is Elongation factor G from Rickettsia massiliae (strain Mtu5).